Consider the following 3303-residue polypeptide: Protein unc-80 homolog (3303 aa).

Low complexity predominate over residues M1–N37. The tract at residues M1–D43 is disordered. The chain crosses the membrane as a helical span at residues L202–L222. Disordered stretches follow at residues L284 to P316, L361 to I422, L491 to I512, A526 to R546, F1036 to N1067, L1443 to A1563, and V1627 to I1671. A compositionally biased stretch (low complexity) spans L361–N377. Composition is skewed to basic and acidic residues over residues S378–F391 and S401–I422. Polar residues predominate over residues P495–S505. A compositionally biased stretch (polar residues) spans S1058–N1067. The segment covering F1490 to R1499 has biased composition (basic residues). Polar residues predominate over residues D1546 to S1556. Positions K1660–I1671 are enriched in basic and acidic residues. 3 consecutive transmembrane segments (helical) span residues V1969 to L1989, L2018 to V2038, and L2048 to F2068. Disordered regions lie at residues N2518–E2550, E3003–Q3158, and F3170–N3262. The segment covering E3003–D3018 has biased composition (basic and acidic residues). 2 stretches are compositionally biased toward polar residues: residues Q3033–H3053 and P3071–G3106. A compositionally biased stretch (gly residues) spans S3124–T3134. Positions G3135–Q3152 are enriched in low complexity. Basic residues predominate over residues S3198–R3217. Over residues I3226–A3239 the composition is skewed to polar residues. Positions S3246–S3257 are enriched in low complexity.

The protein belongs to the unc-80 family. In terms of assembly, interacts with unc79 and na. Can interact with unc79 independently of na.

It localises to the membrane. Its function is as follows. Component of the na (narrow abdomen) sodium channel complex. In the circadian clock neurons it functions with na and unc79 to promote circadian rhythmicity. This Drosophila melanogaster (Fruit fly) protein is Protein unc-80 homolog.